The following is a 108-amino-acid chain: MAVKIRLARSGAKKCAYFKIVIANNCSPRDGAFIEKVGHYNPMLPKDNHERVILKTDRIEHWLSHGAQPTEKVINFLQQFSITLPLAIQKKHNIKLKNYVAKPSKKSK.

Belongs to the bacterial ribosomal protein bS16 family.

In Orientia tsutsugamushi (strain Boryong) (Rickettsia tsutsugamushi), this protein is Small ribosomal subunit protein bS16.